A 178-amino-acid chain; its full sequence is ATP synthase subunit b (178 aa).

A helical membrane pass occupies residues 30-50 (FFFVLAIFLIVLAVIGTFVVP).

It belongs to the ATPase B chain family. As to quaternary structure, F-type ATPases have 2 components, F(1) - the catalytic core - and F(0) - the membrane proton channel. F(1) has five subunits: alpha(3), beta(3), gamma(1), delta(1), epsilon(1). F(0) has three main subunits: a(1), b(2) and c(10-14). The alpha and beta chains form an alternating ring which encloses part of the gamma chain. F(1) is attached to F(0) by a central stalk formed by the gamma and epsilon chains, while a peripheral stalk is formed by the delta and b chains.

It is found in the cell membrane. Functionally, f(1)F(0) ATP synthase produces ATP from ADP in the presence of a proton or sodium gradient. F-type ATPases consist of two structural domains, F(1) containing the extramembraneous catalytic core and F(0) containing the membrane proton channel, linked together by a central stalk and a peripheral stalk. During catalysis, ATP synthesis in the catalytic domain of F(1) is coupled via a rotary mechanism of the central stalk subunits to proton translocation. Component of the F(0) channel, it forms part of the peripheral stalk, linking F(1) to F(0). In Mycobacterium avium (strain 104), this protein is ATP synthase subunit b.